The chain runs to 251 residues: NADPH-dependent oxidoreductase (251 aa).

It belongs to the flavin oxidoreductase frp family. FMN serves as cofactor.

Functionally, reduces FMN, organic nitro compounds and disulfide DTNB. Involved in maintenance of the cellular redox state and the disulfide stress response. The chain is NADPH-dependent oxidoreductase (nfrA) from Staphylococcus aureus (strain MRSA252).